Reading from the N-terminus, the 468-residue chain is Glutamine synthetase (468 aa).

The 85-residue stretch at 14-98 (HDVKYVDLRF…ILCDVYEPST (85 aa)) folds into the GS beta-grasp domain. In terms of domain architecture, GS catalytic spans 106-468 (PRGIAKAAEK…PIEYKMYYSV (363 aa)). 2 residues coordinate Mg(2+): glutamate 131 and glutamate 133. Residue glutamate 209 participates in ATP binding. Positions 214 and 221 each coordinate Mg(2+). L-glutamate-binding positions include 265 to 266 (NG) and glycine 266. Histidine 270 contributes to the Mg(2+) binding site. ATP-binding positions include 272 to 274 (HQS) and serine 274. Residues arginine 322, glutamate 328, and arginine 340 each coordinate L-glutamate. Residues arginine 340, arginine 345, and lysine 353 each coordinate ATP. Glutamate 358 lines the Mg(2+) pocket. Arginine 360 serves as a coordination point for L-glutamate. Tyrosine 398 is subject to O-AMP-tyrosine.

Belongs to the glutamine synthetase family. As to quaternary structure, oligomer of 12 subunits arranged in the form of two hexameric ring. The cofactor is Mg(2+).

It localises to the cytoplasm. It catalyses the reaction L-glutamate + NH4(+) + ATP = L-glutamine + ADP + phosphate + H(+). With respect to regulation, the activity of this enzyme could be controlled by adenylation under conditions of abundant glutamine. Catalyzes the ATP-dependent biosynthesis of glutamine from glutamate and ammonia. The polypeptide is Glutamine synthetase (Azospirillum brasilense).